A 77-amino-acid polypeptide reads, in one-letter code: MKAFIAILSIAIVLLLIVSIKETSAKDCKQECVKRYTKGDLTNFLKAEYEPKNRGGICYCEFTCHVKFYIYLKHEMD.

The N-terminal stretch at 1–25 (MKAFIAILSIAIVLLLIVSIKETSA) is a signal peptide. The propeptide occupies 26-46 (KDCKQECVKRYTKGDLTNFLK).

This sequence belongs to the scolopendra neurotoxin 3 family. Post-translationally, contains 2 disulfide bonds. Expressed by the venom gland.

It is found in the secreted. The polypeptide is Putative neurotoxin 1 (Scolopendra mutilans (Chinese red-headed centipede)).